The primary structure comprises 231 residues: Putative transglycosylase H16_A0665 (231 aa).

Residues 8 to 28 (FIKLLVLAVIGGALLAAIAIL) form a helical membrane-spanning segment.

This sequence belongs to the glycosyltransferase 51 family.

It localises to the secreted. The protein localises to the membrane. It participates in cell wall biogenesis; peptidoglycan biosynthesis. Its function is as follows. Cell wall formation. This is Putative transglycosylase H16_A0665 from Cupriavidus necator (strain ATCC 17699 / DSM 428 / KCTC 22496 / NCIMB 10442 / H16 / Stanier 337) (Ralstonia eutropha).